The following is a 367-amino-acid chain: Glutamate 5-kinase (367 aa).

Lys-8 contacts ATP. Ser-49, Asp-136, and Asn-148 together coordinate substrate. Residues 168-169 (TD) and 210-216 (TGGMATK) contribute to the ATP site. Residues 275–353 (TGKLYLDRGA…EEIPTILGYS (79 aa)) form the PUA domain.

It belongs to the glutamate 5-kinase family.

Its subcellular location is the cytoplasm. It carries out the reaction L-glutamate + ATP = L-glutamyl 5-phosphate + ADP. It functions in the pathway amino-acid biosynthesis; L-proline biosynthesis; L-glutamate 5-semialdehyde from L-glutamate: step 1/2. In terms of biological role, catalyzes the transfer of a phosphate group to glutamate to form L-glutamate 5-phosphate. This chain is Glutamate 5-kinase, found in Cyanothece sp. (strain PCC 7425 / ATCC 29141).